Reading from the N-terminus, the 180-residue chain is Shikimate kinase (180 aa).

14 to 19 (GAGKSS) serves as a coordination point for ATP. A Mg(2+)-binding site is contributed by Ser-18. Positions 36, 60, and 82 each coordinate substrate. ATP is bound at residue Arg-120. Arg-139 is a substrate binding site.

The protein belongs to the shikimate kinase family. Monomer. It depends on Mg(2+) as a cofactor.

The protein localises to the cytoplasm. The catalysed reaction is shikimate + ATP = 3-phosphoshikimate + ADP + H(+). Its pathway is metabolic intermediate biosynthesis; chorismate biosynthesis; chorismate from D-erythrose 4-phosphate and phosphoenolpyruvate: step 5/7. Catalyzes the specific phosphorylation of the 3-hydroxyl group of shikimic acid using ATP as a cosubstrate. This Xylella fastidiosa (strain 9a5c) protein is Shikimate kinase.